Reading from the N-terminus, the 134-residue chain is UPF0412 protein YaaI (134 aa).

The signal sequence occupies residues 1-23 (MKSVITISASLAISLMLCCTAQA).

It belongs to the UPF0412 family.

The polypeptide is UPF0412 protein YaaI (Escherichia coli O127:H6 (strain E2348/69 / EPEC)).